A 516-amino-acid polypeptide reads, in one-letter code: Cytochrome P450 93G1 (516 aa).

Residues 11–31 form a helical membrane-spanning segment; sequence LLGMGTTMGALALALVVVVVV. A heme-binding site is contributed by Cys454.

This sequence belongs to the cytochrome P450 family. Heme serves as cofactor.

It is found in the membrane. It carries out the reaction a flavanone + reduced [NADPH--hemoprotein reductase] + O2 = a flavone + oxidized [NADPH--hemoprotein reductase] + 2 H2O + H(+). Its pathway is secondary metabolite biosynthesis; flavonoid biosynthesis. Functionally, functions as a flavone synthase II (FNSII) that catalyzes the direct conversion of flavanones to flavones. In vitro, can convert naringenin and eriodictyol to apigenin and luteolin, respectively. Acts as a key branch point enzyme that channels flavanones to the biosynthesis of soluble tricin O-linked conjugates. This Oryza sativa subsp. japonica (Rice) protein is Cytochrome P450 93G1.